The sequence spans 245 residues: UDP-N-acetyl-D-mannosaminuronic acid transferase (245 aa).

It belongs to the glycosyltransferase 26 family.

It carries out the reaction UDP-N-acetyl-alpha-D-mannosaminouronate + N-acetyl-alpha-D-glucosaminyl-di-trans,octa-cis-undecaprenyl diphosphate = beta-D-ManNAcA-(1-&gt;4)-alpha-D-GlcNAc-di-trans,octa-cis-undecaprenyl diphosphate + UDP + H(+). It functions in the pathway bacterial outer membrane biogenesis; enterobacterial common antigen biosynthesis. In terms of biological role, catalyzes the synthesis of Und-PP-GlcNAc-ManNAcA (Lipid II), the second lipid-linked intermediate involved in enterobacterial common antigen (ECA) synthesis. The chain is UDP-N-acetyl-D-mannosaminuronic acid transferase from Photorhabdus laumondii subsp. laumondii (strain DSM 15139 / CIP 105565 / TT01) (Photorhabdus luminescens subsp. laumondii).